A 160-amino-acid chain; its full sequence is SsrA-binding protein (160 aa).

The tract at residues 134-160 is disordered; that stretch reads YDKRDTERERDSNRELHRAVRNKGKED.

The protein belongs to the SmpB family.

The protein localises to the cytoplasm. In terms of biological role, required for rescue of stalled ribosomes mediated by trans-translation. Binds to transfer-messenger RNA (tmRNA), required for stable association of tmRNA with ribosomes. tmRNA and SmpB together mimic tRNA shape, replacing the anticodon stem-loop with SmpB. tmRNA is encoded by the ssrA gene; the 2 termini fold to resemble tRNA(Ala) and it encodes a 'tag peptide', a short internal open reading frame. During trans-translation Ala-aminoacylated tmRNA acts like a tRNA, entering the A-site of stalled ribosomes, displacing the stalled mRNA. The ribosome then switches to translate the ORF on the tmRNA; the nascent peptide is terminated with the 'tag peptide' encoded by the tmRNA and targeted for degradation. The ribosome is freed to recommence translation, which seems to be the essential function of trans-translation. This is SsrA-binding protein from Pseudomonas fluorescens (strain SBW25).